The primary structure comprises 76 residues: Acyl carrier protein (76 aa).

The Carrier domain maps to 1–75; the sequence is MVLEKIKTLM…DVVLYIEKNL (75 aa). Position 35 is an O-(pantetheine 4'-phosphoryl)serine (Ser35).

This sequence belongs to the acyl carrier protein (ACP) family. 4'-phosphopantetheine is transferred from CoA to a specific serine of apo-ACP by AcpS. This modification is essential for activity because fatty acids are bound in thioester linkage to the sulfhydryl of the prosthetic group.

The protein localises to the cytoplasm. It participates in lipid metabolism; fatty acid biosynthesis. In terms of biological role, carrier of the growing fatty acid chain in fatty acid biosynthesis. The polypeptide is Acyl carrier protein (Phytoplasma australiense).